A 344-amino-acid chain; its full sequence is MFPAVNEIKVQTWRRDQRGECPRRSAQCRLFSCAHRECAPAARSLENRGPENRTARPEATMSGDVLCNGHSAFHRLLKHSSSRTHEALVVKIIQENKNTPLFCTAPEPRRDSGVNGEFLLNSAELQDEQTLPLHCIHSAADITSSKHRKPARRKVKRSTKRAAESKSPANRKVTDYFPIRRSSRKSKSELKYEEKQHIDTLISNGIEDGMMVRFIEGKGRGVFATQPFQKGQYVVEYHGDLLQITDAKQREALYAQDPSTGCYMYYFQYLSKTYCVDATKESDRLGRLINHSKNGNCQTKLHAIAGKPHLILVASRDIQEGEELLYDYGDRSKSSIEAHPWLKH.

The interval 143-176 is disordered; sequence TSSKHRKPARRKVKRSTKRAAESKSPANRKVTDY. Residues 145 to 160 show a composition bias toward basic residues; the sequence is SKHRKPARRKVKRSTK. The SET domain maps to 208–329; it reads DGMMVRFIEG…EGEELLYDYG (122 aa). S-adenosyl-L-methionine is bound by residues 218–220, Y263, and 290–291; these read KGR and NH.

The protein belongs to the class V-like SAM-binding methyltransferase superfamily. Histone-lysine methyltransferase family. PR/SET subfamily.

The protein localises to the nucleus. It is found in the chromosome. It carries out the reaction L-lysyl(20)-[histone H4] + S-adenosyl-L-methionine = N(6)-methyl-L-lysyl(20)-[histone H4] + S-adenosyl-L-homocysteine + H(+). The catalysed reaction is L-lysyl-[protein] + S-adenosyl-L-methionine = N(6)-methyl-L-lysyl-[protein] + S-adenosyl-L-homocysteine + H(+). Functionally, protein-lysine N-methyltransferase that monomethylates both histones and non-histone proteins. Specifically monomethylates 'Lys-20' of histone H4 (H4K20me1). H4K20me1 is enriched during mitosis and represents a specific tag for epigenetic transcriptional repression. Mainly functions in euchromatin regions, thereby playing a central role in the silencing of euchromatic genes. Required for cell proliferation, probably by contributing to the maintenance of proper higher-order structure of DNA during mitosis. Involved in chromosome condensation and proper cytokinesis. The protein is N-lysine methyltransferase KMT5A-A of Danio rerio (Zebrafish).